The sequence spans 205 residues: Molybdenum cofactor guanylyltransferase (205 aa).

GTP contacts are provided by residues 14–16, Lys-27, Asp-77, and Asp-107; that span reads LAG. Asp-107 contacts Mg(2+).

It belongs to the MobA family. As to quaternary structure, monomer. Mg(2+) is required as a cofactor.

Its subcellular location is the cytoplasm. It catalyses the reaction Mo-molybdopterin + GTP + H(+) = Mo-molybdopterin guanine dinucleotide + diphosphate. Transfers a GMP moiety from GTP to Mo-molybdopterin (Mo-MPT) cofactor (Moco or molybdenum cofactor) to form Mo-molybdopterin guanine dinucleotide (Mo-MGD) cofactor. This is Molybdenum cofactor guanylyltransferase from Burkholderia lata (strain ATCC 17760 / DSM 23089 / LMG 22485 / NCIMB 9086 / R18194 / 383).